A 331-amino-acid chain; its full sequence is Beta-ketoacyl-[acyl-carrier-protein] synthase III (331 aa).

Active-site residues include C115 and H255. The segment at 256–260 (QANFR) is ACP-binding. N285 is a catalytic residue.

It belongs to the thiolase-like superfamily. FabH family. Homodimer.

The protein resides in the cytoplasm. It carries out the reaction malonyl-[ACP] + acetyl-CoA + H(+) = 3-oxobutanoyl-[ACP] + CO2 + CoA. The protein operates within lipid metabolism; fatty acid biosynthesis. Catalyzes the condensation reaction of fatty acid synthesis by the addition to an acyl acceptor of two carbons from malonyl-ACP. Catalyzes the first condensation reaction which initiates fatty acid synthesis and may therefore play a role in governing the total rate of fatty acid production. Possesses both acetoacetyl-ACP synthase and acetyl transacylase activities. Its substrate specificity determines the biosynthesis of branched-chain and/or straight-chain of fatty acids. The sequence is that of Beta-ketoacyl-[acyl-carrier-protein] synthase III from Helicobacter pylori (strain ATCC 700392 / 26695) (Campylobacter pylori).